The chain runs to 197 residues: Transcription factor FapR (197 aa).

The protein belongs to the FapR family.

In terms of biological role, transcriptional factor involved in regulation of membrane lipid biosynthesis by repressing genes involved in fatty acid and phospholipid metabolism. This chain is Transcription factor FapR, found in Bacillus mycoides (strain KBAB4) (Bacillus weihenstephanensis).